A 124-amino-acid polypeptide reads, in one-letter code: Small ribosomal subunit protein uS12 (124 aa).

Asp-89 carries the 3-methylthioaspartic acid modification.

This sequence belongs to the universal ribosomal protein uS12 family. Part of the 30S ribosomal subunit. Contacts proteins S8 and S17. May interact with IF1 in the 30S initiation complex.

In terms of biological role, with S4 and S5 plays an important role in translational accuracy. Interacts with and stabilizes bases of the 16S rRNA that are involved in tRNA selection in the A site and with the mRNA backbone. Located at the interface of the 30S and 50S subunits, it traverses the body of the 30S subunit contacting proteins on the other side and probably holding the rRNA structure together. The combined cluster of proteins S8, S12 and S17 appears to hold together the shoulder and platform of the 30S subunit. This Proteus mirabilis (strain HI4320) protein is Small ribosomal subunit protein uS12.